Consider the following 364-residue polypeptide: Fructose-bisphosphate aldolase B (364 aa).

Ala-2 carries the post-translational modification N-acetylalanine. At Lys-13 the chain carries N6-succinyllysine. A Phosphoserine modification is found at Ser-36. Thr-39 is subject to Phosphothreonine. Arg-43 lines the beta-D-fructose 1,6-bisphosphate pocket. Ser-89 carries the phosphoserine modification. Position 119 is a phosphothreonine (Thr-119). Lys-121 carries the post-translational modification N6-succinyllysine. A Phosphoserine modification is found at Ser-132. Glu-188 acts as the Proton acceptor in catalysis. The Schiff-base intermediate with dihydroxyacetone-P role is filled by Lys-230. Phosphoserine is present on residues Ser-272, Ser-276, Ser-299, and Ser-301. 272 to 274 is a binding site for beta-D-fructose 1,6-bisphosphate; that stretch reads SGG. Residue Arg-304 participates in beta-D-fructose 1,6-bisphosphate binding. A Phosphoserine modification is found at Ser-309. Residue Lys-317 is modified to N6-succinyllysine.

This sequence belongs to the class I fructose-bisphosphate aldolase family. Homotetramer. Interacts with BBS1, BBS2, BBS4 and BBS7. Forms a ternary complex with G6PD and TP53; this interaction is direct.

The protein resides in the cytoplasm. The protein localises to the cytosol. It is found in the cytoskeleton. Its subcellular location is the microtubule organizing center. It localises to the centrosome. The protein resides in the centriolar satellite. It carries out the reaction beta-D-fructose 1,6-bisphosphate = D-glyceraldehyde 3-phosphate + dihydroxyacetone phosphate. The enzyme catalyses beta-D-fructose 1-phosphate = D-glyceraldehyde + dihydroxyacetone phosphate. It functions in the pathway carbohydrate degradation; glycolysis; D-glyceraldehyde 3-phosphate and glycerone phosphate from D-glucose: step 4/4. It participates in carbohydrate biosynthesis; gluconeogenesis. Its pathway is carbohydrate metabolism; fructose metabolism. Functionally, catalyzes the aldol cleavage of fructose 1,6-biphosphate to form two triosephosphates dihydroxyacetone phosphate and D-glyceraldehyde 3-phosphate in glycolysis as well as the reverse stereospecific aldol addition reaction in gluconeogenesis. In fructolysis, metabolizes fructose 1-phosphate derived from the phosphorylation of dietary fructose by fructokinase into dihydroxyacetone phosphate and D-glyceraldehyde. Acts as an adapter independently of its enzymatic activity, exerts a tumor suppressor role by stabilizing the ternary complex with G6PD and TP53 to inhibit G6PD activity and keep oxidative pentose phosphate metabolism in check. This Pongo abelii (Sumatran orangutan) protein is Fructose-bisphosphate aldolase B (ALDOB).